The following is a 331-amino-acid chain: Photosystem II assembly lipoprotein Ycf48 (331 aa).

Positions 1–23 (MIPVIRSFLSLLLCVGLTFGLGG) are cleaved as a signal peptide. Cys-24 is lipidated: N-palmitoyl cysteine. A lipid anchor (S-diacylglycerol cysteine) is attached at Cys-24.

The protein belongs to the Ycf48 family. Part of early PSII assembly complexes which includes D1 (psbA) and PsbI; not found in mature PSII. Binds to the lumenal side of PSII complexes. Interacts with YidC.

Its subcellular location is the cellular thylakoid membrane. A factor required for optimal assembly of photosystem II (PSII), acting in the early stages of PSII assembly. Also plays a role in replacement of photodamaged D1 (psbA). Assists YidC in synthesis of chlorophyll-binding proteins. This Synechococcus sp. (strain RCC307) protein is Photosystem II assembly lipoprotein Ycf48.